A 264-amino-acid chain; its full sequence is Apolipoprotein A-I (264 aa).

Positions M1 to A18 are cleaved as a signal peptide. A run of 2 repeats spans residues L67–A88 and P89–T110. Residues L67–A264 form a 10 X approximate tandem repeats region. A 3; half-length repeat occupies K111 to R121. 5 consecutive repeat copies span residues P122–A143, P144–T165, P166–A187, P188–I209, and P210–T231. One copy of the 9; half-length repeat lies at P232–T242. Repeat 10 spans residues P243–A264.

The protein belongs to the apolipoprotein A1/A4/E family. As to expression, major protein of plasma HDL, also found in chylomicrons.

Its subcellular location is the secreted. In terms of biological role, participates in the reverse transport of cholesterol from tissues to the liver for excretion by promoting cholesterol efflux from tissues and by acting as a cofactor for the lecithin cholesterol acyltransferase (LCAT). This chain is Apolipoprotein A-I (APOA1), found in Anas platyrhynchos (Mallard).